Consider the following 393-residue polypeptide: Na(+)/H(+) antiporter NhaA (393 aa).

11 consecutive transmembrane segments (helical) span residues 24–44 (GGLVLMAVALAAIVTANSPLA), 58–78 (LSLLHWINDALMALFFLLVGL), 96–116 (ILPGAAALGGMLFPALFYILF), 126–146 (GWAIPTATDIAFALGVISLFG), 155–175 (IFLAALAIIDDLGAVVIIALF), 178–198 (SDLNLLALAAAAAVLAALYGM), 214–234 (AVLWVLVFASGIHATLAGVLL), 267–287 (VAFIVVPIFGFANAGVSFSGV), 300–320 (VAAGLLLGKLVGVLSTVFLLV), 338–358 (GVAALCGIGFTMSLFIGLLAF), and 369–389 (MGILLGSLLSGLVGAAMLATF).

It belongs to the NhaA Na(+)/H(+) (TC 2.A.33) antiporter family.

Its subcellular location is the cell inner membrane. It catalyses the reaction Na(+)(in) + 2 H(+)(out) = Na(+)(out) + 2 H(+)(in). Na(+)/H(+) antiporter that extrudes sodium in exchange for external protons. In Rhizobium etli (strain ATCC 51251 / DSM 11541 / JCM 21823 / NBRC 15573 / CFN 42), this protein is Na(+)/H(+) antiporter NhaA.